We begin with the raw amino-acid sequence, 784 residues long: Copal-8-ol diphosphate hydratase TPSSA9, chloroplastic (784 aa).

Position 240 (arginine 240) interacts with substrate. Residues aspartate 372 and aspartate 374 each coordinate Mg(2+). A DXDD motif motif is present at residues 372-375; the sequence is DIDD. Arginine 459 contacts substrate.

Belongs to the terpene synthase family.

The protein resides in the plastid. It is found in the chloroplast. It carries out the reaction (2E,6E,10E)-geranylgeranyl diphosphate + H2O = 8-hydroxycopalyl diphosphate. Its pathway is secondary metabolite biosynthesis; terpenoid biosynthesis. Functionally, involved in the biosynthesis of labdane-type diterpenoid including sclareol, a diterpene-diol that is used as fragrance and flavoring, and has anticancer effects (able to kill leukemic and colon cancer cells by apoptosis). Sclareol can also be used as synthesis precursor of ambergris substitution fragance products such as ambrox. Terpene synthase that produces 8-hydroxycopalyl diphosphate from geranylgeranyl diphosphate (GGPP). In Salvia sclarea (Clary sage), this protein is Copal-8-ol diphosphate hydratase TPSSA9, chloroplastic.